The sequence spans 69 residues: Large ribosomal subunit protein uL29 (69 aa).

The protein belongs to the universal ribosomal protein uL29 family.

The protein is Large ribosomal subunit protein uL29 of Clostridium perfringens (strain ATCC 13124 / DSM 756 / JCM 1290 / NCIMB 6125 / NCTC 8237 / Type A).